The chain runs to 131 residues: Fluoride-specific ion channel FluC 2 (131 aa).

A run of 4 helical transmembrane segments spans residues 5 to 25 (FGVA…SLLV), 39 to 59 (LATL…TTLA), 70 to 90 (LAVG…AWES), and 104 to 124 (LYVL…RALA). Na(+)-binding residues include G78 and T81.

It belongs to the fluoride channel Fluc/FEX (TC 1.A.43) family.

It is found in the cell membrane. The enzyme catalyses fluoride(in) = fluoride(out). With respect to regulation, na(+) is not transported, but it plays an essential structural role and its presence is essential for fluoride channel function. Fluoride-specific ion channel. Important for reducing fluoride concentration in the cell, thus reducing its toxicity. The polypeptide is Fluoride-specific ion channel FluC 2 (Deinococcus geothermalis (strain DSM 11300 / CIP 105573 / AG-3a)).